The chain runs to 102 residues: Large ribosomal subunit protein bL21 (102 aa).

Positions 79-91 are enriched in basic residues; it reads RKDSKRKKGHRQP. The disordered stretch occupies residues 79-102; sequence RKDSKRKKGHRQPYTKLTIDKINA.

Belongs to the bacterial ribosomal protein bL21 family. In terms of assembly, part of the 50S ribosomal subunit. Contacts protein L20.

Functionally, this protein binds to 23S rRNA in the presence of protein L20. This chain is Large ribosomal subunit protein bL21, found in Staphylococcus carnosus (strain TM300).